Reading from the N-terminus, the 650-residue chain is Threonine--tRNA ligase (650 aa).

In terms of domain architecture, TGS spans 1-66; it reads MVQITLPDGS…DQDAKLAIVT (66 aa). Positions 247 to 538 are catalytic; the sequence is DHRKIGRDLD…LIENHAGAMP (292 aa). Cys-338, His-389, and His-515 together coordinate Zn(2+).

The protein belongs to the class-II aminoacyl-tRNA synthetase family. In terms of assembly, homodimer. The cofactor is Zn(2+).

Its subcellular location is the cytoplasm. It catalyses the reaction tRNA(Thr) + L-threonine + ATP = L-threonyl-tRNA(Thr) + AMP + diphosphate + H(+). Its function is as follows. Catalyzes the attachment of threonine to tRNA(Thr) in a two-step reaction: L-threonine is first activated by ATP to form Thr-AMP and then transferred to the acceptor end of tRNA(Thr). Also edits incorrectly charged L-seryl-tRNA(Thr). This is Threonine--tRNA ligase from Bordetella avium (strain 197N).